The sequence spans 324 residues: Methyltransferase pytC (324 aa).

It belongs to the methyltransferase superfamily. LaeA methyltransferase family.

The protein operates within secondary metabolite biosynthesis. Methyltransferase; part of the gene cluster that mediates the biosynthesis of pyranterreones, a family of antioxidative compounds. The first step of pyranonigrins biosynthesis is performed by the hybrid PKS-NRPS synthetase pytA that condenses 4 malonyl-CoA units ato the acetyl starter unit by the modular PKS of pytA. The acyl chain is then connected to an L-serine through the amide bond by the modular NRPS of pytA. A tetramic acid is formed and released from the PKS-NRPS pytA to give pyranterreone 5 with the help of the thioesterase pytI. Pyranterreone 5 could be methylated by pytC to afford pyranterreone 6. Both pyranterreones 5 and 6 are subsequently oxidized by the FAD-linked oxidoreductase pytB and the cytochrome P450 monooxygenase pytD to form the fused gamma-pyrone core, resulting in pyranterreones 7 and 11, respectively. The hydroxy group at C-8 of pyranterreones 7 and 11 are dehydrated by the aspartyl protease pytH to form a delta-7 double bond to give pyranterreones 3 and 1, 2 accordingly. The exo-methylene of pyranterreone 3 could be reduced into a pendant methyl by reductase pytE to provide pyranterreone 4, also known as cordylactam. Pyranterreone 4 can be reconverted to pyranterreone 3 through pytB-catalyzed dehydrogenation or further oxidized to pyranterreones 9 and 10. The protein is Methyltransferase pytC of Aspergillus terreus (strain NIH 2624 / FGSC A1156).